The following is a 393-amino-acid chain: G protein-activated inward rectifier potassium channel 3 (393 aa).

Positions 1–23 are disordered; the sequence is MAQENAAFSPGQEEPPRRRGRQR. The Cytoplasmic segment spans residues 1–57; sequence MAQENAAFSPGQEEPPRRRGRQRYVEKDGRCNVQQGNVRETYRYLTDLFTTLVDLQW. A helical membrane pass occupies residues 58–82; sequence RLSLLFFVLAYALTWLFFGAIWWLI. Residues 83 to 106 are Extracellular-facing; the sequence is AYGRGDLEHLEDTAWTPCVNNLNG. The segment at residues 107-118 is an intramembrane region (helical; Pore-forming); sequence FVAAFLFSIETE. An intramembrane region (pore-forming) is located at residues 119-125; it reads TTIGYGH. The short motif at 120 to 125 is the Selectivity filter element; the sequence is TIGYGH. Over 126–134 the chain is Extracellular; it reads RVITDQCPE. Residues 135-156 traverse the membrane as a helical segment; it reads GIVLLLLQAILGSMVNAFMVGC. The Cytoplasmic portion of the chain corresponds to 157-393; it reads MFVKISQPNK…LPPPESESKV (237 aa). The tract at residues 360–393 is disordered; that stretch reads KVEEEGAGEGAGGEAGADKEQNGCLPPPESESKV. The segment covering 384 to 393 has biased composition (pro residues); sequence LPPPESESKV. Positions 390–393 match the PDZ-binding motif; it reads ESKV.

This sequence belongs to the inward rectifier-type potassium channel (TC 1.A.2.1) family. KCNJ9 subfamily. In terms of assembly, associates with KCNJ3/GIRK1 to form a G-protein-activated heteromultimer pore-forming unit. Interacts (via PDZ-binding motif) with SNX27 (via PDZ domain); the interaction is required when endocytosed to prevent degradation in lysosomes and promote recycling to the plasma membrane.

It is found in the membrane. It carries out the reaction K(+)(in) = K(+)(out). Its function is as follows. Inward rectifier potassium channels are characterized by a greater tendency to allow potassium to flow into the cell rather than out of it. Their voltage dependence is regulated by the concentration of extracellular potassium; as external potassium is raised, the voltage range of the channel opening shifts to more positive voltages. The inward rectification is mainly due to the blockage of outward current by internal magnesium, This receptor is controlled by G proteins. Unable to produce channel activity when expressed alone. Forms a functional channel in association with KCNJ3/GIRK1. The protein is G protein-activated inward rectifier potassium channel 3 (KCNJ9) of Homo sapiens (Human).